We begin with the raw amino-acid sequence, 364 residues long: Fructose-bisphosphate aldolase B (364 aa).

Positions 56 and 147 each coordinate substrate. Glutamate 188 serves as the catalytic Proton acceptor. Lysine 230 acts as the Schiff-base intermediate with dihydroxyacetone-P in catalysis.

Belongs to the class I fructose-bisphosphate aldolase family. Homotetramer.

The protein localises to the cytoplasm. It localises to the cytoskeleton. It is found in the microtubule organizing center. Its subcellular location is the centrosome. The protein resides in the centriolar satellite. It carries out the reaction beta-D-fructose 1,6-bisphosphate = D-glyceraldehyde 3-phosphate + dihydroxyacetone phosphate. Its pathway is carbohydrate degradation; glycolysis; D-glyceraldehyde 3-phosphate and glycerone phosphate from D-glucose: step 4/4. This chain is Fructose-bisphosphate aldolase B (ALDOB), found in Gallus gallus (Chicken).